The sequence spans 301 residues: Chitin deacetylase 1 (301 aa).

The N-terminal stretch at 1-24 is a signal peptide; sequence MKIFNTIQSVLFAAFFLKQGNCLA. Residues Asn-26, Asn-50, and Asn-68 are each glycosylated (N-linked (GlcNAc...) asparagine). Cys-107 and Cys-290 are disulfide-bonded. The NodB homology domain maps to 108–288; the sequence is FKLSQTFDDG…LIGSDQLTIA (181 aa). Catalysis depends on Asp-115, which acts as the Proton acceptor. Asp-115 is a binding site for acetate. Co(2+) contacts are provided by Asp-116, His-162, and His-166. Asn-189 carries N-linked (GlcNAc...) asparagine glycosylation. Residue Tyr-203 coordinates acetate. The active-site Proton donor is the His-263.

The protein belongs to the polysaccharide deacetylase family. Requires Co(2+) as cofactor.

It localises to the prospore. The enzyme catalyses [(1-&gt;4)-N-acetyl-beta-D-glucosaminyl](n) + n H2O = chitosan + n acetate. In terms of biological role, hydrolyzes the N-acetamido groups of N-acetyl-D-glucosamine residues in chitin to form chitosan and acetate. Chitosan is a component of the spore wall. The protein is Chitin deacetylase 1 of Saccharomyces cerevisiae (strain ATCC 204508 / S288c) (Baker's yeast).